The primary structure comprises 466 residues: MSLSLWQQCLARLQDELPATEFSMWIRPLQAELRDNTLALYAPNRFVLDWVRDKYLNNINGLLNTFCGADAPQLRFEVGTKPVTQTLKTPVHNVVAPTQTTTAQPQRVAPAARSGWDNVPAPAEPTYRSNVNVKHTFDNFVEGKSNQLARAAARQVADNPGGAYNPLFLYGGTGLGKTHLLHAVGNGIMARKPNAKVVYMHSERFVQDMVKALQNNAIEEFKRYYRSVDALLIDDIQFFANKERSQEEFFHTFNALLEGNQQIILTSDRYPKEINGVEDRLKSRFGWGLTVAIEPPELETRVAILMKKADENDIRLPGEVAFFIAKRLRSNVRELEGALNRVIANANFTGRAITIDFVREALRDLLALQEKLVTIDNIQKTVAEYYKIKIADLLSKRRSRSVARPRQMAMALAKELTNHSLPEIGDAFGGRDHTTVLHACRKIEQLREESHDIKEDFSNLIRTLSS.

The interval 1–86 is domain I, interacts with DnaA modulators; it reads MSLSLWQQCL…EVGTKPVTQT (86 aa). Residues 86–129 form a domain II region; it reads TLKTPVHNVVAPTQTTTAQPQRVAPAARSGWDNVPAPAEPTYRS. The interval 130 to 346 is domain III, AAA+ region; that stretch reads NVNVKHTFDN…GALNRVIANA (217 aa). 4 residues coordinate ATP: Gly174, Gly176, Lys177, and Thr178. Residues 347–466 form a domain IV, binds dsDNA region; it reads NFTGRAITID…FSNLIRTLSS (120 aa).

This sequence belongs to the DnaA family. Oligomerizes as a right-handed, spiral filament on DNA at oriC.

Its subcellular location is the cytoplasm. In terms of biological role, plays an essential role in the initiation and regulation of chromosomal replication. ATP-DnaA binds to the origin of replication (oriC) to initiate formation of the DNA replication initiation complex once per cell cycle. Binds the DnaA box (a 9 base pair repeat at the origin) and separates the double-stranded (ds)DNA. Forms a right-handed helical filament on oriC DNA; dsDNA binds to the exterior of the filament while single-stranded (ss)DNA is stabiized in the filament's interior. The ATP-DnaA-oriC complex binds and stabilizes one strand of the AT-rich DNA unwinding element (DUE), permitting loading of DNA polymerase. After initiation quickly degrades to an ADP-DnaA complex that is not apt for DNA replication. Binds acidic phospholipids. This chain is Chromosomal replication initiator protein DnaA, found in Salmonella gallinarum (strain 287/91 / NCTC 13346).